Here is a 164-residue protein sequence, read N- to C-terminus: 3-isopropylmalate dehydratase small subunit 1 (164 aa).

This sequence belongs to the LeuD family. LeuD type 2 subfamily. In terms of assembly, heterodimer of LeuC and LeuD.

The catalysed reaction is (2R,3S)-3-isopropylmalate = (2S)-2-isopropylmalate. Its pathway is amino-acid biosynthesis; L-leucine biosynthesis; L-leucine from 3-methyl-2-oxobutanoate: step 2/4. Functionally, catalyzes the isomerization between 2-isopropylmalate and 3-isopropylmalate, via the formation of 2-isopropylmaleate. In Pyrococcus abyssi (strain GE5 / Orsay), this protein is 3-isopropylmalate dehydratase small subunit 1 (leuD1).